We begin with the raw amino-acid sequence, 441 residues long: Protein arginine methyltransferase NDUFAF7, mitochondrial (441 aa).

The transit peptide at 1–46 (MNFLAAAGVRRLCAMRAVLPCLWRGKYFSSGNEPAENNTVTPMLRH) directs the protein to the mitochondrion. The tract at residues 415–434 (GRNHQTNARQSKPSPSPVAG) is disordered. Over residues 418–427 (HQTNARQSKP) the composition is skewed to polar residues.

The protein belongs to the NDUFAF7 family. As to quaternary structure, interacts with NDUFS2.

Its subcellular location is the mitochondrion. It catalyses the reaction L-arginyl-[protein] + 2 S-adenosyl-L-methionine = N(omega),N(omega)'-dimethyl-L-arginyl-[protein] + 2 S-adenosyl-L-homocysteine + 2 H(+). Arginine methyltransferase involved in the assembly or stability of mitochondrial NADH:ubiquinone oxidoreductase complex (complex I). Acts by mediating symmetric dimethylation of 'Arg-118' of NDUFS2 after it assembles into the complex I, stabilizing the early intermediate complex. The sequence is that of Protein arginine methyltransferase NDUFAF7, mitochondrial from Bos taurus (Bovine).